A 230-amino-acid chain; its full sequence is Orotidine 5'-phosphate decarboxylase (230 aa).

Substrate contacts are provided by residues aspartate 10, lysine 31, 58–67, threonine 117, arginine 179, glutamine 188, glycine 208, and arginine 209; that span reads DLKLHDIPNT. Lysine 60 (proton donor) is an active-site residue.

It belongs to the OMP decarboxylase family. Type 1 subfamily. Homodimer.

It catalyses the reaction orotidine 5'-phosphate + H(+) = UMP + CO2. Its pathway is pyrimidine metabolism; UMP biosynthesis via de novo pathway; UMP from orotate: step 2/2. In terms of biological role, catalyzes the decarboxylation of orotidine 5'-monophosphate (OMP) to uridine 5'-monophosphate (UMP). In Staphylococcus aureus (strain Mu3 / ATCC 700698), this protein is Orotidine 5'-phosphate decarboxylase.